Consider the following 360-residue polypeptide: Aminomethyltransferase (360 aa).

Belongs to the GcvT family. As to quaternary structure, the glycine cleavage system is composed of four proteins: P, T, L and H.

It carries out the reaction N(6)-[(R)-S(8)-aminomethyldihydrolipoyl]-L-lysyl-[protein] + (6S)-5,6,7,8-tetrahydrofolate = N(6)-[(R)-dihydrolipoyl]-L-lysyl-[protein] + (6R)-5,10-methylene-5,6,7,8-tetrahydrofolate + NH4(+). In terms of biological role, the glycine cleavage system catalyzes the degradation of glycine. The sequence is that of Aminomethyltransferase from Pseudoalteromonas translucida (strain TAC 125).